We begin with the raw amino-acid sequence, 381 residues long: Protein-glutamate methylesterase/protein-glutamine glutaminase 1 (381 aa).

The region spanning 14 to 132 (RVMLVDDSAV…DLAGGVDFKS (119 aa)) is the Response regulatory domain. Residue Asp65 is modified to 4-aspartylphosphate. A disordered region spans residues 143-173 (QARRAGARPARPGGPPATRPVIASTSPRTPV). A compositionally biased stretch (low complexity) spans 144-153 (ARRAGARPAR). The CheB-type methylesterase domain maps to 188-381 (PEPPDIIAIG…PWIMKLAARR (194 aa)). Catalysis depends on residues Ser199, His227, and Asp323.

The protein belongs to the CheB family. Phosphorylated by CheA. Phosphorylation of the N-terminal regulatory domain activates the methylesterase activity.

The protein resides in the cytoplasm. It carries out the reaction [protein]-L-glutamate 5-O-methyl ester + H2O = L-glutamyl-[protein] + methanol + H(+). The enzyme catalyses L-glutaminyl-[protein] + H2O = L-glutamyl-[protein] + NH4(+). Functionally, involved in chemotaxis. Part of a chemotaxis signal transduction system that modulates chemotaxis in response to various stimuli. Catalyzes the demethylation of specific methylglutamate residues introduced into the chemoreceptors (methyl-accepting chemotaxis proteins or MCP) by CheR. Also mediates the irreversible deamidation of specific glutamine residues to glutamic acid. This Paramagnetospirillum magneticum (strain ATCC 700264 / AMB-1) (Magnetospirillum magneticum) protein is Protein-glutamate methylesterase/protein-glutamine glutaminase 1.